The chain runs to 59 residues: uncharacterized protein (59 aa).

Residues 27–59 (SCFQNRPPEPASFQNLRPEPASLQNLRTEPTSF) form a disordered region. Over residues 48–59 (SLQNLRTEPTSF) the composition is skewed to polar residues.

This is an uncharacterized protein from Homo sapiens (Human).